Here is an 82-residue protein sequence, read N- to C-terminus: Sulfur carrier protein TusA (82 aa).

The active-site Cysteine persulfide intermediate is Cys19.

This sequence belongs to the sulfur carrier protein TusA family.

Its subcellular location is the cytoplasm. In terms of biological role, sulfur carrier protein which probably makes part of a sulfur-relay system. The sequence is that of Sulfur carrier protein TusA from Photobacterium profundum (strain SS9).